We begin with the raw amino-acid sequence, 437 residues long: MALQNIGASNRNDAFYRYKMPKMVTKTEGKGNGIKTNIINNVEIAKALARPPSYTTKYFGCELGAQSKFDEKTGTSLVNGAHNTSKLAGLLENFIKKFVQCYGCGNPETEIIITKTQMVNLKCAACGFISEVDMRDKLTNFILKNPPEQKKVSKDKKAMRKAEKERLKEGELADEEQRKLKAKKKALSNGKDSKTSKNHSSDEDISPKHDENALEVDEDEDDDDGVEWQTDTSREAAEKRMMEQLSAKTAEMVMLSAMEVEEKKAPKSKSNGNVVKTENPPPQEKNLVQDMKEYLKKGSPISALKSFISSLSEPPQDIMDALFNALFDGVGKGFAKEVTKKKNYLAAAATMQEDGSQMHLLNSIGTFCGKNGNEEALKEVALVLKALYDQDIIEEEVVLDWYEKGLTGADKSSPVWKNVKPFVEWLQSAESESEEED.

Position 29-36 (29-36) interacts with GTP; it reads GKGNGIKT. 2 stretches are compositionally biased toward basic and acidic residues: residues 148-179 and 191-212; these read EQKKVSKDKKAMRKAEKERLKEGELADEEQRK and KDSKTSKNHSSDEDISPKHDEN. 2 disordered regions span residues 148–231 and 262–284; these read EQKK…WQTD and EKKAPKSKSNGNVVKTENPPPQE. A Phosphoserine; by CK2 modification is found at Ser-201. Residues 213–226 are compositionally biased toward acidic residues; sequence ALEVDEDEDDDDGV. Thr-230 carries the post-translational modification Phosphothreonine; by CK2. The 159-residue stretch at 278–436 folds into the W2 domain; that stretch reads ENPPPQEKNL…QSAESESEEE (159 aa). Residues Ser-428, Ser-431, and Ser-433 each carry the phosphoserine; by CK2 modification.

Belongs to the eIF-2-beta/eIF-5 family. Phosphorylated at Ser-201, Thr-230, Ser-428, Ser-431, and Ser-433 by CK2.

Catalyzes the hydrolysis of GTP bound to the 40S ribosomal initiation complex (40S.mRNA.Met-tRNA[F].eIF-2.GTP) with the subsequent joining of a 60S ribosomal subunit resulting in the release of eIF-2 and the guanine nucleotide. The subsequent joining of a 60S ribosomal subunit results in the formation of a functional 80S initiation complex (80S.mRNA.Met-tRNA[F]). This chain is Probable eukaryotic translation initiation factor 5-2, found in Arabidopsis thaliana (Mouse-ear cress).